The following is a 540-amino-acid chain: Beta-glucosidase 1B (540 aa).

Substrate-binding residues include Q25, H128, and N174. E175 functions as the Proton donor in the catalytic mechanism. Substrate is bound at residue Y316. Residue E380 is the Nucleophile of the active site. Substrate-binding positions include W430 and 437-438; that span reads EW. Residues 481 to 492 show a composition bias toward low complexity; sequence PAAETKKAATPS. Residues 481–524 form a disordered region; sequence PAAETKKAATPSPLKPHGAISNGVSKKSSATKEPKSASRKKGRK.

This sequence belongs to the glycosyl hydrolase 1 family.

It catalyses the reaction Hydrolysis of terminal, non-reducing beta-D-glucosyl residues with release of beta-D-glucose.. Functionally, plays an important role in cellulose degradation. Shows hydrolytic activity against several glycosidic compounds. The protein is Beta-glucosidase 1B of Phanerodontia chrysosporium (White-rot fungus).